Reading from the N-terminus, the 987-residue chain is Ephrin type-B receptor 4 (987 aa).

Residues 1-15 (MELRALLCWASLATA) form the signal peptide. Topologically, residues 16–539 (LEETLLNTKL…ESESWREQLA (524 aa)) are extracellular. Positions 17 to 202 (EETLLNTKLE…FYKKCSWLIT (186 aa)) constitute an Eph LBD domain. 2 cysteine pairs are disulfide-bonded: cysteine 61/cysteine 184 and cysteine 97/cysteine 107. Residues asparagine 203, asparagine 335, and asparagine 426 are each glycosylated (N-linked (GlcNAc...) asparagine). 2 consecutive Fibronectin type-III domains span residues 323–432 (PPSA…TDRE) and 436–529 (AVSD…TQLD). Residues 540–560 (LIAGTAVVGVVLVLVVVIIAV) form a helical membrane-spanning segment. Residues 561–987 (LCLRKQSNGR…GGTGGPAQQF (427 aa)) lie on the Cytoplasmic side of the membrane. Positions 615-899 (VKIEEVIGAG…ENGGASHPLL (285 aa)) constitute a Protein kinase domain. ATP-binding positions include 621-629 (IGAGEFGEV) and lysine 647. Aspartate 740 (proton acceptor) is an active-site residue. Phosphoserine occurs at positions 769, 770, 911, and 943. The 65-residue stretch at 907 to 971 (SAFGSVGEWL…LASVQHMKSQ (65 aa)) folds into the SAM domain. A disordered region spans residues 965-987 (VQHMKSQAKPGAPGGTGGPAQQF). Residues 976–987 (APGGTGGPAQQF) show a composition bias toward gly residues. The PDZ-binding signature appears at 985 to 987 (QQF).

Belongs to the protein kinase superfamily. Tyr protein kinase family. Ephrin receptor subfamily. Heterotetramer upon binding of the ligand. The heterotetramer is composed of an ephrin dimer and a receptor dimer. Oligomerization is probably required to induce biological responses. Interacts with RASA1; the interaction depends on EPHB4 tyrosine-phosphorylation. Post-translationally, phosphorylated; autophosphorylation is stimulated by EFNB2. Expressed in various organ systems, including lung, liver, kidney, intestine, muscle and heart. Expressed in myogenic progenitor cells.

The protein resides in the cell membrane. It catalyses the reaction L-tyrosyl-[protein] + ATP = O-phospho-L-tyrosyl-[protein] + ADP + H(+). In terms of biological role, receptor tyrosine kinase which binds promiscuously transmembrane ephrin-B family ligands residing on adjacent cells, leading to contact-dependent bidirectional signaling into neighboring cells. The signaling pathway downstream of the receptor is referred to as forward signaling while the signaling pathway downstream of the ephrin ligand is referred to as reverse signaling. Together with its cognate ligand/functional ligand EFNB2 it is involved in the regulation of cell adhesion and migration, and plays a central role in heart morphogenesis, angiogenesis and blood vessel remodeling and permeability. EPHB4-mediated forward signaling controls cellular repulsion and segregation from EFNB2-expressing cells. The sequence is that of Ephrin type-B receptor 4 (Ephb4) from Mus musculus (Mouse).